The primary structure comprises 114 residues: Non-specific lipid-transfer protein 1 (114 aa).

A signal peptide spans 1 to 23; that stretch reads MEMVSKIACFVLLCMVVVAPHAE. Disulfide bonds link cysteine 27–cysteine 73, cysteine 37–cysteine 50, cysteine 51–cysteine 96, and cysteine 71–cysteine 110.

Belongs to the plant LTP family.

Its function is as follows. Plant non-specific lipid-transfer proteins transfer phospholipids as well as galactolipids across membranes. May play a role in wax or cutin deposition in the cell walls of expanding epidermal cells and certain secretory tissues. This chain is Non-specific lipid-transfer protein 1 (LTP1), found in Solanum pennellii (Tomato).